The primary structure comprises 150 residues: uncharacterized protein (150 aa).

Residues 3–145 form the Flavodoxin-like domain; that stretch reads VAILSGSVYG…DAEPWLAEFA (143 aa).

It belongs to the flavodoxin family. MioC subfamily. FMN is required as a cofactor.

Functionally, probable electron transporter. This is an uncharacterized protein from Pseudomonas aeruginosa (strain ATCC 15692 / DSM 22644 / CIP 104116 / JCM 14847 / LMG 12228 / 1C / PRS 101 / PAO1).